The primary structure comprises 282 residues: MEMO1 family protein Msed_2139 (282 aa).

It belongs to the MEMO1 family.

The polypeptide is MEMO1 family protein Msed_2139 (Metallosphaera sedula (strain ATCC 51363 / DSM 5348 / JCM 9185 / NBRC 15509 / TH2)).